The primary structure comprises 206 residues: MARYTGSKNRIARRYGVNIFGRARNPLLHKPNPPGVHGARRRKKSDFGLQLEEKQKLKAIYGMLSEKQLVAYYKKALRLEGNTASHFAEMLECRLDNLVYRLKFGHTIFAAQQLVAHGHILVDGKKVDRRSFQVKPGMVISIKEKSRKIKIIAEALDNPARSVPEYLSSDKEHFSGQLLAKPIPEQMPWPIEISLPVICDFLAHST.

In terms of domain architecture, S4 RNA-binding spans 93-156 (CRLDNLVYRL…RKIKIIAEAL (64 aa)).

It belongs to the universal ribosomal protein uS4 family. In terms of assembly, part of the 30S ribosomal subunit. Contacts protein S5. The interaction surface between S4 and S5 is involved in control of translational fidelity.

In terms of biological role, one of the primary rRNA binding proteins, it binds directly to 16S rRNA where it nucleates assembly of the body of the 30S subunit. Its function is as follows. With S5 and S12 plays an important role in translational accuracy. The polypeptide is Small ribosomal subunit protein uS4 (Protochlamydia amoebophila (strain UWE25)).